The chain runs to 471 residues: Ribulose bisphosphate carboxylase large chain (471 aa).

Residues Asn-115 and Thr-165 each coordinate substrate. The active-site Proton acceptor is the Lys-167. Lys-169 provides a ligand contact to substrate. 3 residues coordinate Mg(2+): Lys-193, Asp-195, and Glu-196. The residue at position 193 (Lys-193) is an N6-carboxylysine. The Proton acceptor role is filled by His-286. The substrate site is built by Arg-287, His-319, and Ser-371.

It belongs to the RuBisCO large chain family. Type I subfamily. As to quaternary structure, heterohexadecamer of 8 large chains and 8 small chains. Forms a CsoS2-CsoS1-RuBisCO complex. It depends on Mg(2+) as a cofactor.

It is found in the carboxysome. It carries out the reaction 2 (2R)-3-phosphoglycerate + 2 H(+) = D-ribulose 1,5-bisphosphate + CO2 + H2O. It catalyses the reaction D-ribulose 1,5-bisphosphate + O2 = 2-phosphoglycolate + (2R)-3-phosphoglycerate + 2 H(+). Its function is as follows. RuBisCO catalyzes two reactions: the carboxylation of D-ribulose 1,5-bisphosphate, the primary event in carbon dioxide fixation, as well as the oxidative fragmentation of the pentose substrate in the photorespiration process. Both reactions occur simultaneously and in competition at the same active site. This Parasynechococcus marenigrum (strain WH8102) protein is Ribulose bisphosphate carboxylase large chain.